Reading from the N-terminus, the 24-residue chain is Unknown protein 6 (24 aa).

The polypeptide is Unknown protein 6 (Lonomia obliqua (Moth)).